The chain runs to 692 residues: Paramyosin (692 aa).

The nonhelical region stretch occupies residues 1-15 (MNKKRDSELAKLRKL). The stretch at 16 to 692 (LEDVHIESEE…DHRVKELLLQ (677 aa)) forms a coiled coil. The interval 26-57 (TAHHLRQKHQAAIQEMQDQLDQLQKAKNKSDK) is disordered.

The protein belongs to the paramyosin family. As to quaternary structure, homodimer.

It is found in the cytoplasm. Its subcellular location is the myofibril. Paramyosin is a major structural component of many thick filaments isolated from invertebrate muscles. The sequence is that of Paramyosin from Dermatophagoides farinae (American house dust mite).